We begin with the raw amino-acid sequence, 753 residues long: 5-methyltetrahydropteroyltriglutamate--homocysteine methyltransferase (753 aa).

5-methyltetrahydropteroyltri-L-glutamate is bound by residues 17–20 and Lys-117; that span reads RELK. Residues 431 to 433 and Glu-484 each bind L-homocysteine; that span reads IGS. Residues 431 to 433 and Glu-484 contribute to the L-methionine site; that span reads IGS. 5-methyltetrahydropteroyltri-L-glutamate contacts are provided by residues 515-516 and Trp-561; that span reads RC. Asp-599 contributes to the L-homocysteine binding site. Asp-599 serves as a coordination point for L-methionine. Glu-605 contacts 5-methyltetrahydropteroyltri-L-glutamate. Positions 641, 643, and 665 each coordinate Zn(2+). Catalysis depends on His-694, which acts as the Proton donor. Zn(2+) is bound at residue Cys-726.

The protein belongs to the vitamin-B12 independent methionine synthase family. It depends on Zn(2+) as a cofactor.

It catalyses the reaction 5-methyltetrahydropteroyltri-L-glutamate + L-homocysteine = tetrahydropteroyltri-L-glutamate + L-methionine. It participates in amino-acid biosynthesis; L-methionine biosynthesis via de novo pathway; L-methionine from L-homocysteine (MetE route): step 1/1. In terms of biological role, catalyzes the transfer of a methyl group from 5-methyltetrahydrofolate to homocysteine resulting in methionine formation. The protein is 5-methyltetrahydropteroyltriglutamate--homocysteine methyltransferase of Escherichia coli O1:K1 / APEC.